A 122-amino-acid chain; its full sequence is UPF0231 protein VIBHAR_03438 (122 aa).

Belongs to the UPF0231 family.

In Vibrio campbellii (strain ATCC BAA-1116), this protein is UPF0231 protein VIBHAR_03438.